Reading from the N-terminus, the 357-residue chain is DNA integrity scanning protein DisA (357 aa).

Residues 8-146 form the DAC domain; that stretch reads VKSIINILQL…GNLRYTLKDI (139 aa). ATP contacts are provided by residues Gly-75, Leu-93, and 106–110; that span reads MRHRT.

It belongs to the DisA family. As to quaternary structure, homooctamer. Mg(2+) serves as cofactor.

It carries out the reaction 2 ATP = 3',3'-c-di-AMP + 2 diphosphate. Participates in a DNA-damage check-point that is active prior to asymmetric division when DNA is damaged. DisA forms globular foci that rapidly scan along the chromosomes during sporulation, searching for lesions. When a lesion is present, DisA pauses at the lesion site. This triggers a cellular response that culminates in a temporary block in sporulation initiation. In terms of biological role, also has diadenylate cyclase activity, catalyzing the condensation of 2 ATP molecules into cyclic di-AMP (c-di-AMP). c-di-AMP acts as a signaling molecule that couples DNA integrity with progression of sporulation. The rise in c-di-AMP level generated by DisA while scanning the chromosome, operates as a positive signal that advances sporulation; upon encountering a lesion, the DisA focus arrests at the damaged site and halts c-di-AMP synthesis. In Bacillus cereus (strain B4264), this protein is DNA integrity scanning protein DisA.